The sequence spans 185 residues: Ribosome-recycling factor (185 aa).

This sequence belongs to the RRF family.

It localises to the cytoplasm. Responsible for the release of ribosomes from messenger RNA at the termination of protein biosynthesis. May increase the efficiency of translation by recycling ribosomes from one round of translation to another. This is Ribosome-recycling factor from Sodalis glossinidius (strain morsitans).